A 544-amino-acid chain; its full sequence is Methionine--tRNA ligase (544 aa).

Residues 10-20 carry the 'HIGH' region motif; the sequence is PYANGSLHLGH. Cysteine 141, cysteine 144, cysteine 153, and cysteine 156 together coordinate Zn(2+). A 'KMSKS' region motif is present at residues 329-333; the sequence is KLSTS. Threonine 332 provides a ligand contact to ATP.

The protein belongs to the class-I aminoacyl-tRNA synthetase family. MetG type 1 subfamily. In terms of assembly, monomer. The cofactor is Zn(2+).

Its subcellular location is the cytoplasm. It carries out the reaction tRNA(Met) + L-methionine + ATP = L-methionyl-tRNA(Met) + AMP + diphosphate. Functionally, is required not only for elongation of protein synthesis but also for the initiation of all mRNA translation through initiator tRNA(fMet) aminoacylation. The chain is Methionine--tRNA ligase from Bacillus cereus (strain G9842).